We begin with the raw amino-acid sequence, 255 residues long: Hydroxyacylglutathione hydrolase (255 aa).

Zn(2+)-binding residues include His56, His58, Asp60, His61, His112, Asp129, and His167.

This sequence belongs to the metallo-beta-lactamase superfamily. Glyoxalase II family. In terms of assembly, monomer. Zn(2+) serves as cofactor.

It catalyses the reaction an S-(2-hydroxyacyl)glutathione + H2O = a 2-hydroxy carboxylate + glutathione + H(+). The protein operates within secondary metabolite metabolism; methylglyoxal degradation; (R)-lactate from methylglyoxal: step 2/2. In terms of biological role, thiolesterase that catalyzes the hydrolysis of S-D-lactoyl-glutathione to form glutathione and D-lactic acid. This is Hydroxyacylglutathione hydrolase from Pseudomonas fluorescens (strain SBW25).